The primary structure comprises 578 residues: Pentatricopeptide repeat-containing protein At4g22760 (578 aa).

PPR repeat units follow at residues 68–102 (DSFS…GIPP), 103–137 (SSHA…GLCG), 138–168 (CVYV…IAEK), 169–203 (NTVS…DAVS), 204–230 (WNLI…MPLK), 231–261 (SPAS…MPQK), 262–292 (NGVS…MSKK), 293–327 (DKLV…NSYI), 330–364 (DEIT…GIKI), 365–395 (DDLL…LNKK), 396–430 (DTVS…KIPP), 431–465 (NVVT…NLEP), and 466–496 (SADH…MPMQ). Residues 501 to 576 (VWGALLLASG…TLGCSWVEGS (76 aa)) form a type E motif region.

The protein belongs to the PPR family. PCMP-E subfamily.

This is Pentatricopeptide repeat-containing protein At4g22760 (PCMP-E6) from Arabidopsis thaliana (Mouse-ear cress).